A 759-amino-acid chain; its full sequence is MDEQLKQSALDFHEFPVPGKIQVSPTKPLATQRDLALAYSPGVAAPCLEIEKDPLAAYKYTARGNLVAVISNGTAVLGLGNIGALAGKPVMEGKGVLFKKFAGIDVFDIEVDELDPDKFINVVAALEPTFGGINLEDIKAPECFYIEQKLRERMNIPVFHDDQHGTAIISTAAILNGLRVVEKNISDVRMVVSGAGAAAIACMNLLVALGMQKHNIVVCDSKGVIYKGREPNMAETKAAYAVDDSGKRTLDEVIDGADIFLGCSGPKVLTQEMVKKMARAPMILALANPEPEILPPLAKEVRPDAIICTGRSDYPNQVNNVLCFPFIFRGALDVGATAINEEMKLAAVRAIAELAHAEQSEVVASAYGDQDLSFGPEYIIPKPFDPRLIVKIAPAVAKAAMDSGVATRPIADFDAYIDKLTEFVYKTNLFMKPIFSQARKDPKRVVLPEGEEARVLHATQELITLGLAKPILIGRPSVIEMRIQKLGLQIKAGVDFEIVNNESDPRFKEYWSEYYQIMKRRGITQEQAQRAMIGNHTAIGAIMVQRGEADAMICGTIGDYHEHFSVVKAVFGYRDGVHTAGAMNALLLPSGNTFIADTYVNEDPTPEQLAEIAVMAAETVRRFGIEPKVALLSHSNFGSSNSLSASKMRETLERVRERAPDLMIDGEMHGDAALVESIRNDRMPDSPLKGAANILVMPNMEAARISYNLLRVSSSEGVTVGPVLMGVSKPVHVLTPIASVRRIVNMVALAVVEAQTTPL.

The tract at residues 1-428 (MDEQLKQSAL…KLTEFVYKTN (428 aa)) is malic enzyme. Catalysis depends on Y39, which acts as the Proton donor. Residue K94 is the Proton acceptor of the active site. A divalent metal cation contacts are provided by E136, D137, and D162. NADP(+) is bound by residues 195–198 (AGAA), N288, and N320. Residues 429-759 (LFMKPIFSQA…AVVEAQTTPL (331 aa)) form a phosphate acetyltransferase region.

In the N-terminal section; belongs to the malic enzymes family. The protein in the C-terminal section; belongs to the phosphate acetyltransferase and butyryltransferase family. Mg(2+) is required as a cofactor. It depends on Mn(2+) as a cofactor.

It catalyses the reaction (S)-malate + NADP(+) = pyruvate + CO2 + NADPH. The catalysed reaction is oxaloacetate + H(+) = pyruvate + CO2. The chain is NADP-dependent malic enzyme (maeB) from Salmonella typhimurium (strain LT2 / SGSC1412 / ATCC 700720).